Reading from the N-terminus, the 880-residue chain is Alanine--tRNA ligase (880 aa).

Zn(2+) contacts are provided by His-567, His-571, Cys-669, and His-673.

This sequence belongs to the class-II aminoacyl-tRNA synthetase family. Requires Zn(2+) as cofactor.

Its subcellular location is the cytoplasm. It catalyses the reaction tRNA(Ala) + L-alanine + ATP = L-alanyl-tRNA(Ala) + AMP + diphosphate. Functionally, catalyzes the attachment of alanine to tRNA(Ala) in a two-step reaction: alanine is first activated by ATP to form Ala-AMP and then transferred to the acceptor end of tRNA(Ala). Also edits incorrectly charged Ser-tRNA(Ala) and Gly-tRNA(Ala) via its editing domain. This chain is Alanine--tRNA ligase, found in Bacillus cytotoxicus (strain DSM 22905 / CIP 110041 / 391-98 / NVH 391-98).